The primary structure comprises 159 residues: Cyclic pyranopterin monophosphate synthase (159 aa).

Substrate is bound by residues 75-77 (LCH) and 113-114 (ME). The active site involves Asp-128.

Belongs to the MoaC family. In terms of assembly, homohexamer; trimer of dimers.

The enzyme catalyses (8S)-3',8-cyclo-7,8-dihydroguanosine 5'-triphosphate = cyclic pyranopterin phosphate + diphosphate. It functions in the pathway cofactor biosynthesis; molybdopterin biosynthesis. Its function is as follows. Catalyzes the conversion of (8S)-3',8-cyclo-7,8-dihydroguanosine 5'-triphosphate to cyclic pyranopterin monophosphate (cPMP). The protein is Cyclic pyranopterin monophosphate synthase of Cereibacter sphaeroides (strain ATCC 17029 / ATH 2.4.9) (Rhodobacter sphaeroides).